The primary structure comprises 945 residues: Soluble guanylate cyclase gcy-33 (945 aa).

H104 serves as a coordination point for heme. The stretch at 388–413 (SEVLTEMTREISEAKKTARTLLTQMM) forms a coiled coil. The Guanylate cyclase domain maps to 437–567 (SIGFIRVCDF…DTVNTASRME (131 aa)). 2 disordered regions span residues 639–679 (KEAE…LSGS) and 706–930 (QDEN…KCED). Over residues 661 to 679 (SLGESIDSSSSRRGSLSGS) the composition is skewed to low complexity. Over residues 711-720 (RPPTWSASHS) the composition is skewed to polar residues. Over residues 721–731 (QDIRKPRKTES) the composition is skewed to basic and acidic residues. The span at 732-744 (KITLNSRLSSSDL) shows a compositional bias: polar residues. Composition is skewed to basic and acidic residues over residues 750-759 (ETSKDSDGET) and 766-804 (ELKEVNRIREEALAQEKEEERTTKEENQKIEEVGEDHVS). A coiled-coil region spans residues 763–802 (TSSELKEVNRIREEALAQEKEEERTTKEENQKIEEVGEDH). Polar residues predominate over residues 817 to 828 (GDNNISFSQMPS). The segment covering 851–861 (ISKKKLEKEDS) has biased composition (basic and acidic residues). Residues 862-884 (NSSMSSLDERTTVSAKPTTTRRL) show a composition bias toward polar residues. The segment covering 886–896 (NQKDLEKEKKR) has biased composition (basic and acidic residues). The segment covering 898 to 911 (SMAGSSVTSSSAHS) has biased composition (low complexity). Over residues 916–930 (SKKDTRDKSRCKCED) the composition is skewed to basic and acidic residues.

Belongs to the adenylyl cyclase class-4/guanylyl cyclase family. As to quaternary structure, heterodimer; with other soluble guanylate cyclases. Heme is required as a cofactor. As to expression, expressed in BAG sensory neuron.

It localises to the cytoplasm. It catalyses the reaction GTP = 3',5'-cyclic GMP + diphosphate. Its activity is regulated as follows. May be regulated by molecular oxygen. Probably not activated by nitric oxide (NO). Functionally, synthesizes cyclic GMP (cGMP) from GTP. May be involved in sensitivity to quinine by regulating egl-4 activity through the production of cGMP. The chain is Soluble guanylate cyclase gcy-33 (gcy-33) from Caenorhabditis elegans.